The sequence spans 411 residues: Creatinase (411 aa).

Histidine 240 is a catalytic residue.

Belongs to the peptidase M24 family. Creatinase subfamily. In terms of assembly, homodimer.

The catalysed reaction is creatine + H2O = sarcosine + urea. In Bacillus sp. (strain B-0618), this protein is Creatinase.